The sequence spans 96 residues: Co-chaperonin GroES (96 aa).

This sequence belongs to the GroES chaperonin family. In terms of assembly, heptamer of 7 subunits arranged in a ring. Interacts with the chaperonin GroEL.

The protein resides in the cytoplasm. Together with the chaperonin GroEL, plays an essential role in assisting protein folding. The GroEL-GroES system forms a nano-cage that allows encapsulation of the non-native substrate proteins and provides a physical environment optimized to promote and accelerate protein folding. GroES binds to the apical surface of the GroEL ring, thereby capping the opening of the GroEL channel. The sequence is that of Co-chaperonin GroES from Caulobacter sp. (strain K31).